A 97-amino-acid polypeptide reads, in one-letter code: MLKREEVQHVAHLARLELTEEEEIQFTEQLTDILAYVEQLKELDTEGVEPTFHVLDMELPTRPDEVEPYPDIEGILANAPDRADMFFKVPRILEGED.

Belongs to the GatC family. As to quaternary structure, heterotrimer of A, B and C subunits.

The enzyme catalyses L-glutamyl-tRNA(Gln) + L-glutamine + ATP + H2O = L-glutaminyl-tRNA(Gln) + L-glutamate + ADP + phosphate + H(+). The catalysed reaction is L-aspartyl-tRNA(Asn) + L-glutamine + ATP + H2O = L-asparaginyl-tRNA(Asn) + L-glutamate + ADP + phosphate + 2 H(+). Its function is as follows. Allows the formation of correctly charged Asn-tRNA(Asn) or Gln-tRNA(Gln) through the transamidation of misacylated Asp-tRNA(Asn) or Glu-tRNA(Gln) in organisms which lack either or both of asparaginyl-tRNA or glutaminyl-tRNA synthetases. The reaction takes place in the presence of glutamine and ATP through an activated phospho-Asp-tRNA(Asn) or phospho-Glu-tRNA(Gln). The polypeptide is Aspartyl/glutamyl-tRNA(Asn/Gln) amidotransferase subunit C (Synechococcus sp. (strain JA-2-3B'a(2-13)) (Cyanobacteria bacterium Yellowstone B-Prime)).